The chain runs to 496 residues: Maturase K (496 aa).

This sequence belongs to the intron maturase 2 family. MatK subfamily.

It localises to the plastid. The protein resides in the chloroplast. Functionally, usually encoded in the trnK tRNA gene intron. Probably assists in splicing its own and other chloroplast group II introns. The polypeptide is Maturase K (Paeonia suffruticosa (Tree peony)).